A 250-amino-acid polypeptide reads, in one-letter code: Transcriptional activator protein ExpR (250 aa).

One can recognise an HTH luxR-type domain in the interval 173–238 (KSQEADLFSQ…HAIRLGVEMN (66 aa)). Residues 197–216 (YQEIALILGITTSTVKFHIG) constitute a DNA-binding region (H-T-H motif).

Belongs to the autoinducer-regulated transcriptional regulatory protein family.

Functionally, functions as an OHLL responsive transcriptional regulator that acts in virulence (soft rot disease) through the activation of genes for plant tissue macerating enzymes. In Dickeya dadantii (strain 3937) (Erwinia chrysanthemi (strain 3937)), this protein is Transcriptional activator protein ExpR (expR).